Reading from the N-terminus, the 253-residue chain is Triosephosphate isomerase (253 aa).

8–10 (NWK) provides a ligand contact to substrate. Histidine 93 acts as the Electrophile in catalysis. The active-site Proton acceptor is glutamate 165. Substrate contacts are provided by residues glycine 171, serine 210, and 231 to 232 (GG).

The protein belongs to the triosephosphate isomerase family. In terms of assembly, homodimer.

It is found in the cytoplasm. The enzyme catalyses D-glyceraldehyde 3-phosphate = dihydroxyacetone phosphate. It participates in carbohydrate biosynthesis; gluconeogenesis. Its pathway is carbohydrate degradation; glycolysis; D-glyceraldehyde 3-phosphate from glycerone phosphate: step 1/1. Involved in the gluconeogenesis. Catalyzes stereospecifically the conversion of dihydroxyacetone phosphate (DHAP) to D-glyceraldehyde-3-phosphate (G3P). The polypeptide is Triosephosphate isomerase (Francisella tularensis subsp. holarctica (strain FTNF002-00 / FTA)).